Here is a 283-residue protein sequence, read N- to C-terminus: Acetyl-coenzyme A carboxylase carboxyl transferase subunit beta (283 aa).

The 257-residue stretch at 27 to 283 (VWVKCERCGE…LLDLHLRGEK (257 aa)) folds into the CoA carboxyltransferase N-terminal domain. Cys-31, Cys-34, Cys-50, and Cys-53 together coordinate Zn(2+). The segment at 31-53 (CERCGEILFKKELDKNYKVCLKC) adopts a C4-type zinc-finger fold.

It belongs to the AccD/PCCB family. As to quaternary structure, acetyl-CoA carboxylase is a heterohexamer composed of biotin carboxyl carrier protein (AccB), biotin carboxylase (AccC) and two subunits each of ACCase subunit alpha (AccA) and ACCase subunit beta (AccD). It depends on Zn(2+) as a cofactor.

It localises to the cytoplasm. It carries out the reaction N(6)-carboxybiotinyl-L-lysyl-[protein] + acetyl-CoA = N(6)-biotinyl-L-lysyl-[protein] + malonyl-CoA. The protein operates within lipid metabolism; malonyl-CoA biosynthesis; malonyl-CoA from acetyl-CoA: step 1/1. In terms of biological role, component of the acetyl coenzyme A carboxylase (ACC) complex. Biotin carboxylase (BC) catalyzes the carboxylation of biotin on its carrier protein (BCCP) and then the CO(2) group is transferred by the transcarboxylase to acetyl-CoA to form malonyl-CoA. The sequence is that of Acetyl-coenzyme A carboxylase carboxyl transferase subunit beta from Pelotomaculum thermopropionicum (strain DSM 13744 / JCM 10971 / SI).